A 180-amino-acid polypeptide reads, in one-letter code: Signal peptidase complex subunit 2 (180 aa).

At 1-45 (MTDEPVKVVNKWDGPTVKNALDEVVKKILNDKVGWTESHNLMNLR) the chain is on the cytoplasmic side. A helical transmembrane segment spans residues 46–66 (LLISFIGVAFSAFACGYDYYE). Topologically, residues 67–72 (PFPKSK) are lumenal. A helical transmembrane segment spans residues 73-93 (IVLAVCSVSYFICMGILQMYQ). Residues 94-180 (WYVEKDCIYE…LYNRLIRSEQ (87 aa)) are Cytoplasmic-facing.

It belongs to the SPCS2 family. As to quaternary structure, component of the signal peptidase complex (SPC) composed of a catalytic subunit sec-11 and three accessory subunits spcs-1, spcs-2 and spcs-3. The complex induces a local thinning of the ER membrane which is used to measure the length of the signal peptide (SP) h-region of protein substrates. This ensures the selectivity of the complex towards h-regions shorter than 18-20 amino acids.

The protein localises to the endoplasmic reticulum membrane. Its function is as follows. Component of the signal peptidase complex (SPC) which catalyzes the cleavage of N-terminal signal sequences from nascent proteins as they are translocated into the lumen of the endoplasmic reticulum. Enhances the enzymatic activity of SPC and facilitates the interactions between different components of the translocation site. This Caenorhabditis elegans protein is Signal peptidase complex subunit 2.